Reading from the N-terminus, the 310-residue chain is Protease HtpX homolog (310 aa).

2 helical membrane passes run 16-36 and 55-75; these read NAVLATYCVIFAFIGLLVDVI and IFPTITIIMFLVAFVIIVVCI. His-166 lines the Zn(2+) pocket. Glu-167 is an active-site residue. His-170 is a binding site for Zn(2+). 2 consecutive transmembrane segments (helical) span residues 182-202 and 214-234; these read VGILSNIMLLVANFSVYFFMG and MILLVLQIILPFLTLLLQMYL. Glu-239 is a Zn(2+) binding site.

It belongs to the peptidase M48B family. The cofactor is Zn(2+).

It is found in the cell inner membrane. This is Protease HtpX homolog from Helicobacter pylori (strain Shi470).